We begin with the raw amino-acid sequence, 81 residues long: Photosystem I iron-sulfur center (81 aa).

4Fe-4S ferredoxin-type domains are found at residues 2–31 (AHSV…MIPW) and 39–68 (IASA…VRVY). [4Fe-4S] cluster contacts are provided by Cys-11, Cys-14, Cys-17, Cys-21, Cys-48, Cys-51, Cys-54, and Cys-58.

The eukaryotic PSI reaction center is composed of at least 11 subunits. The cofactor is [4Fe-4S] cluster.

It is found in the plastid. The protein localises to the chloroplast thylakoid membrane. It catalyses the reaction reduced [plastocyanin] + hnu + oxidized [2Fe-2S]-[ferredoxin] = oxidized [plastocyanin] + reduced [2Fe-2S]-[ferredoxin]. Its function is as follows. Apoprotein for the two 4Fe-4S centers FA and FB of photosystem I (PSI); essential for photochemical activity. FB is the terminal electron acceptor of PSI, donating electrons to ferredoxin. The C-terminus interacts with PsaA/B/D and helps assemble the protein into the PSI complex. Required for binding of PsaD and PsaE to PSI. PSI is a plastocyanin-ferredoxin oxidoreductase, converting photonic excitation into a charge separation, which transfers an electron from the donor P700 chlorophyll pair to the spectroscopically characterized acceptors A0, A1, FX, FA and FB in turn. This chain is Photosystem I iron-sulfur center, found in Pinus thunbergii (Japanese black pine).